The chain runs to 105 residues: POU domain, class 3, transcription factor 3 (105 aa).

Positions 1 to 49 constitute a POU-specific domain; it reads QADVGLALGTLYGNVFSQTTICRFEALQLSFKNMCKLKPLLNKWLEEAD. Positions 67-105 form a DNA-binding region, homeobox; that stretch reads KRKKRTSIEVSVKGALESHFLKCPKPAAQEITTLADSLQ.

Belongs to the POU transcription factor family. Class-3 subfamily.

Its subcellular location is the nucleus. In Xenopus laevis (African clawed frog), this protein is POU domain, class 3, transcription factor 3 (pou3f3).